The following is a 386-amino-acid chain: Protein phosphatase methylesterase 1 (386 aa).

Residues 1 to 38 are disordered; it reads MSALEKSMHLGRLPSRPPLPGSGGSQSGAKMRMGPGRK. Residue Ser-15 is modified to Phosphoserine. Arg-16 is modified (asymmetric dimethylarginine; alternate). The residue at position 16 (Arg-16) is an Omega-N-methylarginine; alternate. The residue at position 42 (Ser-42) is a Phosphoserine. Ser-156 is a catalytic residue. Over residues 254-265 the composition is skewed to acidic residues; that stretch reads IIEEEEEDEEGS. Residues 254 to 280 form a disordered region; sequence IIEEEEEDEEGSESISKRKKEDDMETK. Positions 268-280 are enriched in basic and acidic residues; the sequence is ISKRKKEDDMETK. His-349 is an active-site residue.

This sequence belongs to the AB hydrolase superfamily. As to quaternary structure, binds PPP2CA and PPP2CB. Phosphorylated by SIK1 following increases in intracellular sodium, leading to dissociation from the protein phosphatase 2A (PP2A) complex and subsequent dephosphorylation of sodium/potassium-transporting ATPase ATP1A1.

The catalysed reaction is [phosphatase 2A protein]-C-terminal L-leucine methyl ester + H2O = [phosphatase 2A protein]-C-terminal L-leucine + methanol + H(+). Functionally, demethylates proteins that have been reversibly carboxymethylated. Demethylates PPP2CB (in vitro) and PPP2CA. Binding to PPP2CA displaces the manganese ion and inactivates the enzyme. The polypeptide is Protein phosphatase methylesterase 1 (PPME1) (Pongo abelii (Sumatran orangutan)).